A 432-amino-acid chain; its full sequence is Glutamyl-tRNA reductase (432 aa).

Residues 49-52, Ser-101, 106-108, and Gln-112 contribute to the substrate site; these read TCNR and ESQ. The active-site Nucleophile is the Cys-50. An NADP(+)-binding site is contributed by 181–186; it reads GAGETI. A disordered region spans residues 410-432; the sequence is KPGYHHPTLQTTIVKTDETDPAS.

It belongs to the glutamyl-tRNA reductase family. As to quaternary structure, homodimer.

The enzyme catalyses (S)-4-amino-5-oxopentanoate + tRNA(Glu) + NADP(+) = L-glutamyl-tRNA(Glu) + NADPH + H(+). It participates in porphyrin-containing compound metabolism; protoporphyrin-IX biosynthesis; 5-aminolevulinate from L-glutamyl-tRNA(Glu): step 1/2. Functionally, catalyzes the NADPH-dependent reduction of glutamyl-tRNA(Glu) to glutamate 1-semialdehyde (GSA). The chain is Glutamyl-tRNA reductase from Xylella fastidiosa (strain M23).